The primary structure comprises 64 residues: DNA-binding protein 7d (64 aa).

K5, K7, K61, K63, and K64 each carry N6-methyllysine.

Belongs to the 7 kDa DNA-binding/endoribonuclease P2 family. As to quaternary structure, monomer.

Its subcellular location is the cytoplasm. Functionally, can constrain negative DNA supercoils. May be involved in maintaining the integrity of the genome at high temperature. Stimulates the Holliday junction cleavage activity of Hjc. The polypeptide is DNA-binding protein 7d (sso7d) (Saccharolobus solfataricus (strain ATCC 35092 / DSM 1617 / JCM 11322 / P2) (Sulfolobus solfataricus)).